A 438-amino-acid chain; its full sequence is Putative ZDHHC-type palmitoyltransferase 7 (438 aa).

Residues asparagine 12 and asparagine 13 are each glycosylated (N-linked (GlcNAc...) asparagine). 2 consecutive transmembrane segments (helical) span residues isoleucine 48–leucine 68 and tyrosine 77–isoleucine 97. Asparagine 119, asparagine 144, and asparagine 157 each carry an N-linked (GlcNAc...) asparagine glycan. Positions glutamate 183–aspartate 239 are disordered. Low complexity-rich tracts occupy residues threonine 190–isoleucine 206 and asparagine 218–asparagine 234. An N-linked (GlcNAc...) asparagine glycan is attached at asparagine 231. Positions tyrosine 249–leucine 299 constitute a DHHC domain. The next 2 membrane-spanning stretches (helical) occupy residues phenylalanine 294–threonine 314 and isoleucine 330–phenylalanine 350. Asparagine 360 carries an N-linked (GlcNAc...) asparagine glycan.

It belongs to the DHHC palmitoyltransferase family.

The protein resides in the membrane. It catalyses the reaction L-cysteinyl-[protein] + hexadecanoyl-CoA = S-hexadecanoyl-L-cysteinyl-[protein] + CoA. The protein is Putative ZDHHC-type palmitoyltransferase 7 of Dictyostelium discoideum (Social amoeba).